Consider the following 344-residue polypeptide: MWKIGQRGVPYFQRLIAAPFTTLRSLPTSLVETGQNRVIDASLTLIRERAKLKGELVRLIGGAKATTALLGVPLGHNSSFLEGPALAPPHVREAIWCGSTNSTTEEGKELKDPRVLSDVGDIPVQEIREMGVDDDRLMKVVSESVKLVMEEEPLRPLVIGGDHSISYPVVRAVSEKLGGPVDILHLDAHPDIYDRFEGNYYSHASSFARIMEGGYARRLLQVGIRSINKEGREQGKRFGVEQYEMRTFSKDRQMLENLKLGEGVKGVYISIDVDCLDPGFAHGVSHFEPGGLSFRDVLNILHNLQGDLVGADVVEYNPQRDTADDMTAMVAAKFVRELAAKMSK.

The N-terminal 26 residues, 1–26 (MWKIGQRGVPYFQRLIAAPFTTLRSL), are a transit peptide targeting the chloroplast and mitochondrion. Mn(2+)-binding residues include histidine 163, aspartate 187, histidine 189, and aspartate 191. Substrate is bound by residues 189-193 (HPDIY), 197-199 (EGN), and asparagine 228. Residues aspartate 272 and aspartate 274 each coordinate Mn(2+). Position 315 (glutamate 315) interacts with substrate.

This sequence belongs to the arginase family. The cofactor is Mn(2+). As to expression, expressed in vasculature of roots, root tips, leaves and cotyledons.

The protein localises to the mitochondrion. It is found in the plastid. Its subcellular location is the chloroplast. It catalyses the reaction L-arginine + H2O = urea + L-ornithine. The enzyme catalyses agmatine + H2O = urea + putrescine. It participates in nitrogen metabolism; urea cycle; L-ornithine and urea from L-arginine: step 1/1. Its pathway is amine and polyamine biosynthesis; putrescine biosynthesis via agmatine pathway; putrescine from agmatine: step 1/1. Functionally, catalyzes the hydrolysis of L-arginine to urea and L-ornithine. The latter can be utilized in the urea cycle or as a precursor for the synthesis of both polyamines and proline. Possesses agmatinase activity. Catalyzes the formation of putrescine from agmatine. The polypeptide is Arginase 2, chloroplastic/mitochondrial (ARGAH2) (Arabidopsis thaliana (Mouse-ear cress)).